The chain runs to 37 residues: Large ribosomal subunit protein bL36 (37 aa).

This sequence belongs to the bacterial ribosomal protein bL36 family.

The protein is Large ribosomal subunit protein bL36 of Mesomycoplasma hyopneumoniae (strain 7448) (Mycoplasma hyopneumoniae).